Reading from the N-terminus, the 544-residue chain is Transcription factor bHLH119 (544 aa).

2 disordered regions span residues 12 to 59 and 185 to 208; these read NGQV…QPPR and VAST…PPSV. A compositionally biased stretch (polar residues) spans 15-29; the sequence is VVRTSQPQRPSSGKP. Pro residues predominate over residues 50–59; that stretch reads LPLPLLQPPR. A Phosphothreonine modification is found at Thr-269. Residue Ser-274 is modified to Phosphoserine. Disordered regions lie at residues 342–364 and 522–544; these read QGTE…MHNL and QPPL…STSK. The 50-residue stretch at 357-406 folds into the bHLH domain; it reads RAADMHNLSERRRRERINERMKTLQELLPRCRKTDKVSMLEDVIEYVKSL. A compositionally biased stretch (low complexity) spans 522–535; sequence QPPLPLQGQPTSQP. A phosphoserine mark is found at Ser-541 and Ser-543.

In terms of assembly, homodimer.

The protein resides in the nucleus. The chain is Transcription factor bHLH119 (BHLH119) from Arabidopsis thaliana (Mouse-ear cress).